The sequence spans 590 residues: MNAFLLQLAIYLVVLLVLAKPLGAYMTGVFGDKPSRAHWLGPVERLFYRVAGVNPQAEMGWKHYALAVIVVNVLGALAVYALQRAQQWLPLNPQGFGAVTPDSSFNTAVSFVTNTNWQGYSGESTMSYLTQMLGLAVQNFLSAATGIAVVIALIRGFARHSANTIGNFWVDFTRSTVYVLLPLSIIVSVFFVSQGVIQNFDGYKEVTTVTATTYDNPKMDASGQPIKDAQGNPVTEKATTQTQTLPMGPIASQEAIKMIGTNGGGPFNANSAHPYENPNALTNFVQMLAIFIIPAALCFTFGGMVGDGRQGWAVLAAMTVLFVVLAVFLAWAELHPNPMLANLGIDEAVGNMEGKETRFGIVASSLFATITTAASCGAVNAMHDSLTALGGFVPMFLMQLGEVVFGGVGSGLYGMLVYAILAVFIAGLMIGRTPEYLGKKIEVFEMKMTSIAILVTPLLVLVGTAVAVVVTQGKAGIFNPGTHGFSEVLYAFSSAANNNGSAFAGLSANTPFYNLALGICMWLGRFWIIVPVLAMAGTFAAKKRLPVTAGTLPTHGPLFVVLLIGSVLLVGALTYIPALALGPIAEHLAR.

Helical transmembrane passes span 3–23, 63–83, 134–154, 177–197, 284–304, 312–332, 359–379, 388–408, 411–431, 451–471, 515–535, and 558–578; these read AFLL…KPLG, HYAL…YALQ, GLAV…IALI, VYVL…QGVI, FVQM…FGGM, WAVL…LAWA, FGIV…CGAV, ALGG…FGGV, GLYG…LMIG, IAIL…VVVT, LALG…VLAM, and LFVV…YIPA.

It belongs to the KdpA family. The system is composed of three essential subunits: KdpA, KdpB and KdpC.

It localises to the cell inner membrane. In terms of biological role, part of the high-affinity ATP-driven potassium transport (or Kdp) system, which catalyzes the hydrolysis of ATP coupled with the electrogenic transport of potassium into the cytoplasm. This subunit binds the periplasmic potassium ions and delivers the ions to the membrane domain of KdpB through an intramembrane tunnel. This is Potassium-transporting ATPase potassium-binding subunit from Ralstonia pickettii (strain 12J).